A 1700-amino-acid chain; its full sequence is MSSAQCPALVCVMSRLRFWGPWPLLMWQLLWLLVKEAQPLEWVKDPLQLTSNPLGPPDSWSSHSSHFPRESPHAPTLPADPWDFDHLGPSASSEMPAPPQESTENLVPFLDTWDSAGEQPLEPEQFLASQQDLKDKLSPQERLPVSPKKLKKDPAQRWSLAEIIGITRQLSTPQSQKQTLQNEYSSTDTPYPGSLPPELRVKSDEPPGPSEQVGPSQFHLEPETQNPETLEDIQSSSLQQEAPAQLPQLLEEEPSSMQQEAPALPPESSMESLTLPNHEVSVQPPGEDQAYYHLPNITVKPADVEVTITSEPTNETESSQAQQETPIQFPEEVEPSATQQEAPIEPPVPPMEHELSISEQQQPVQPSESPREVESSPTQQETPGQPPEHHEVTVSPPGHHQTHHLASPSVSVKPPDVQLTIAAEPSAEVGTSLVHQEATTRLSGSGNDVEPPAIQHGGPPLLPESSEEAGPLAVQQETSFQSPEPINNENPSPTQQEAAAEHPQTAEEGESSLTHQEAPAQTPEFPNVVVAQPPEHSHLTQATVQPLDLGFTITPESKTEVELSPTMKETPTQPPKKVVPQLRVYQGVTNPTPGQDQAQHPVSPSVTVQLLDLGLTITPEPTTEVGHSTPPKRTIVSPKHPEVTLPHPDQVQTQHSHLTRATVQPLDLGFTITPKSMTEVEPSTALMTTAPPPGHPEVTLPPSDKGQAQHSHLTQATVQPLDLELTITTKPTTEVKPSPTTEETSTQPPDLGLAIIPEPTTETRHSTALEKTTAPRPDRVQTLHRSLTEVTGPPTELEPAQDSLVQSESYTQNKALTAPEEHKASTSTNICELCTCGDEMLSCIDLNPEQRLRQVPVPEPNTHNGTFTILNFQGNYISYIDGNVWKAYSWTEKLILRENNLTELHKDSFEGLLSLQYLDLSCNKIQSIERHTFEPLPFLKFINLSCNVITELSFGTFQAWHGMQFLHKLILNHNPLTTVEDPYLFKLPALKYLDMGTTLVPLTTLKNILMMTVELEKLILPSHMACCLCQFKNSIEAVCKTVKLHCNSACLTNTTHCPEEASVGNPEGAFMKVLQARKNYTSTELIVEPEEPSDSSGINLSGFGSEQLDTNDESDFISTLSYILPYFSAVNLDVKSLLLPFIKLPTTGNSLAKIQTVGQNRQRVKRVLMGPRSIQKRHFKEVGRQSIRREQGAQASVENAAEEKRLGSPAPREVEQPHTQQGPEKLAGNAVYTKPSFTQEHKAAVSVLKPFSKGAPSTSSPAKALPQVRDRWKDLTHAISILESAKARVTNTKTSKPIVHARKKYRFHKTRSHVTHRTPKVKKSPKVRKKSYLSRLMLANRLPFSAAKSLINSPSQGAFSSLGDLSPQENPFLEVSAPSEHFIENNNTKHTTARNAFEENDFMENTNMPEGTISENTNYNHPHEADSAGTAFNLGPTVKQTETKWEYNNVGTDLSPEPKSFNYPLLSSPGDQFEIQLTQQLQSLIPNNNVRRLIAHVIRTLKMDCSGAHVQVTCAKLISRTGHLMKLLSGQQEVKASKIEWDTDQWKIENYINESTEAQSEQKEKSLELKKEVPGYGYTDKLILALIVTGILTILIILFCLIVICCHRRSLQEDEEGFSRGIFRFLPWRGCSSRRESQDGLSSFGQPLWFKDMYKPLSATRINNHAWKLHKKSSNEDKILNRDPGDSEAPTEEEESEALP.

The signal sequence occupies residues methionine 1–lysine 35. Residues glutamate 36–leucine 1582 lie on the Extracellular side of the membrane. Positions leucine 54 to serine 65 are enriched in polar residues. 6 disordered regions span residues leucine 54–glutamate 104, glutamine 130–glutamine 156, glutamine 169–proline 534, threonine 559–proline 580, proline 619–glutamate 642, and threonine 729–glycine 752. The LRR 1 repeat unit spans residues leucine 137–leucine 160. Composition is skewed to polar residues over residues glutamine 169–threonine 189 and glutamate 223–serine 237. 2 LRR repeats span residues leucine 230–glutamate 253 and glutamate 267–alanine 290. A compositionally biased stretch (low complexity) spans leucine 238–leucine 249. Residue asparagine 296 is glycosylated (N-linked (GlcNAc...) asparagine). Polar residues predominate over residues threonine 307 to proline 326. A compositionally biased stretch (low complexity) spans serine 358–glutamate 368. The segment covering leucine 433–glycine 446 has biased composition (polar residues). A compositionally biased stretch (low complexity) spans serine 482–proline 493. A compositionally biased stretch (low complexity) spans threonine 729–proline 749. 6 LRR repeats span residues asparagine 864 to alanine 887, tyrosine 888 to glycine 911, leucine 912 to proline 935, proline 937 to alanine 959, methionine 963 to leucine 987, and leucine 1002 to cysteine 1027. Asparagine 1079 is a glycosylation site (N-linked (GlcNAc...) asparagine). The stretch at leucine 1124–threonine 1146 is one LRR 10 repeat. Basic and acidic residues-rich tracts occupy residues valine 1182–glutamine 1191 and alanine 1201–glutamine 1216. Disordered regions lie at residues valine 1182–alanine 1227 and lysine 1309–arginine 1328. Residues isoleucine 1583–valine 1603 traverse the membrane as a helical segment. The Cytoplasmic segment spans residues isoleucine 1604–proline 1700. The span at asparagine 1675–glycine 1685 shows a compositional bias: basic and acidic residues. Positions asparagine 1675–proline 1700 are disordered. Acidic residues predominate over residues alanine 1689–proline 1700.

The protein belongs to the LRRC37A family.

It localises to the membrane. The protein is Leucine-rich repeat-containing protein 37A2 (LRRC37A2) of Homo sapiens (Human).